Reading from the N-terminus, the 180-residue chain is Hypoxanthine-guanine phosphoribosyltransferase (180 aa).

Diphosphate contacts are provided by lysine 43 and glycine 44. Mg(2+)-binding residues include glutamate 99 and aspartate 100. Residue aspartate 103 is the Proton acceptor of the active site. GMP is bound by residues lysine 131, 152–153 (FI), and aspartate 159. Arginine 165 is a diphosphate binding site.

It belongs to the purine/pyrimidine phosphoribosyltransferase family. The cofactor is Mg(2+).

It is found in the cytoplasm. The catalysed reaction is IMP + diphosphate = hypoxanthine + 5-phospho-alpha-D-ribose 1-diphosphate. It carries out the reaction GMP + diphosphate = guanine + 5-phospho-alpha-D-ribose 1-diphosphate. The protein operates within purine metabolism; IMP biosynthesis via salvage pathway; IMP from hypoxanthine: step 1/1. It functions in the pathway purine metabolism; GMP biosynthesis via salvage pathway; GMP from guanine: step 1/1. In terms of biological role, purine salvage pathway enzyme that catalyzes the transfer of the ribosyl-5-phosphate group from 5-phospho-alpha-D-ribose 1-diphosphate (PRPP) to the N9 position of the 6-oxopurines hypoxanthine and guanine to form the corresponding ribonucleotides IMP (inosine 5'-monophosphate) and GMP (guanosine 5'-monophosphate), with the release of PPi. This is Hypoxanthine-guanine phosphoribosyltransferase (hpt) from Streptococcus thermophilus (strain CNRZ 1066).